We begin with the raw amino-acid sequence, 414 residues long: Tyrosine--tRNA ligase (414 aa).

Tyrosine 38 contacts L-tyrosine. The 'HIGH' region signature appears at 43 to 52; it reads PTATSLHLGN. Tyrosine 165 and glutamine 169 together coordinate L-tyrosine. The 'KMSKS' region motif lies at 228–232; that stretch reads KFGKS. Residue lysine 231 coordinates ATP. Positions 349-414 constitute an S4 RNA-binding domain; the sequence is FNANQIIDLG…KKYFFIIELI (66 aa).

The protein belongs to the class-I aminoacyl-tRNA synthetase family. TyrS type 1 subfamily. Homodimer.

The protein localises to the cytoplasm. It carries out the reaction tRNA(Tyr) + L-tyrosine + ATP = L-tyrosyl-tRNA(Tyr) + AMP + diphosphate + H(+). Its function is as follows. Catalyzes the attachment of tyrosine to tRNA(Tyr) in a two-step reaction: tyrosine is first activated by ATP to form Tyr-AMP and then transferred to the acceptor end of tRNA(Tyr). This is Tyrosine--tRNA ligase from Mesomycoplasma hyopneumoniae (strain 232) (Mycoplasma hyopneumoniae).